The chain runs to 522 residues: Tryptophan 2-halogenase (522 aa).

Positions 17, 36, 42, 44, 45, 48, 103, 127, and 296 each coordinate FAD. Residues S307 and G308 each contribute to the chloride site. An FAD-binding site is contributed by V309.

It belongs to the flavin-dependent halogenase family.

In terms of biological role, involved in the incorporation of a chlorinated tryptophan residue into halogenated forms of the secondary metabolites called chondramides. The chain is Tryptophan 2-halogenase from Chondromyces crocatus.